A 210-amino-acid polypeptide reads, in one-letter code: Urease accessory protein UreG (210 aa).

Residue 14–21 (GPVGSGKT) participates in GTP binding.

This sequence belongs to the SIMIBI class G3E GTPase family. UreG subfamily. In terms of assembly, homodimer. UreD, UreF and UreG form a complex that acts as a GTP-hydrolysis-dependent molecular chaperone, activating the urease apoprotein by helping to assemble the nickel containing metallocenter of UreC. The UreE protein probably delivers the nickel.

The protein localises to the cytoplasm. In terms of biological role, facilitates the functional incorporation of the urease nickel metallocenter. This process requires GTP hydrolysis, probably effectuated by UreG. The chain is Urease accessory protein UreG from Rhodopseudomonas palustris (strain BisA53).